A 451-amino-acid chain; its full sequence is MATHAALASTRIPTNTRFPSKTSHSFPSQCASKRLEVGEFSGLKSTSCISYVHSARDSSFYDVVAAQLTSKANGSTAVKGVTVAKLKVAINGFGRIGRNFLRCWHGRKDSPLEVIVVNDSGGVKNASHLLKYDSMLGTFKAEVKILNNETITVDGKPIKVVSSRDPLKLPWAELGIDIVIEGTGVFVDGPGAGKHIQAGAKKVIITAPAKGADIPTYVIGVNEQDYGHEVADIISNASCTTNCLAPFAKVLDEEFGIVKGTMTTTHSYTGDQRLLDASHRDLRRARAAALNIVPTSTGAAKAVSLVLPQLKGKLNGIALRVPTPNVSVVDLVVNVAKKGISAEDVNAAFRKAAEGPLKGILDVCDVPLVSVDFRCSDVSTTIDSSLTMVMGDDMVKVVAWYDNEWGYSQRVVDLAHLVANKWPGTPKVGSGDPLEDFCETNPADEECKVYE.

The disordered stretch occupies residues 1–25 (MATHAALASTRIPTNTRFPSKTSHS). A chloroplast-targeting transit peptide spans 1–84 (MATHAALAST…STAVKGVTVA (84 aa)). Residues 11 to 25 (RIPTNTRFPSKTSHS) are compositionally biased toward polar residues. NADP(+) contacts are provided by residues 95-96 (RI), aspartate 119, and arginine 164. Residues 238–240 (SCT), threonine 269, arginine 284, 297–298 (TG), and arginine 320 each bind D-glyceraldehyde 3-phosphate. The active-site Nucleophile is cysteine 239. NADP(+) is bound at residue asparagine 403.

The protein belongs to the glyceraldehyde-3-phosphate dehydrogenase family. Tetramer of either four A chains (GAPDH 2) or two A and two B chains (GAPDH 1).

The protein localises to the plastid. The protein resides in the chloroplast. It carries out the reaction D-glyceraldehyde 3-phosphate + phosphate + NADP(+) = (2R)-3-phospho-glyceroyl phosphate + NADPH + H(+). Its pathway is carbohydrate biosynthesis; Calvin cycle. In Pisum sativum (Garden pea), this protein is Glyceraldehyde-3-phosphate dehydrogenase B, chloroplastic (GAPB).